A 196-amino-acid chain; its full sequence is FMN-dependent NADH:quinone oxidoreductase (196 aa).

Residues serine 10, serine 16–serine 18, methionine 93–phenylalanine 96, and threonine 137–glycine 140 each bind FMN.

This sequence belongs to the azoreductase type 1 family. As to quaternary structure, homodimer. The cofactor is FMN.

It catalyses the reaction 2 a quinone + NADH + H(+) = 2 a 1,4-benzosemiquinone + NAD(+). The enzyme catalyses N,N-dimethyl-1,4-phenylenediamine + anthranilate + 2 NAD(+) = 2-(4-dimethylaminophenyl)diazenylbenzoate + 2 NADH + 2 H(+). Quinone reductase that provides resistance to thiol-specific stress caused by electrophilic quinones. In terms of biological role, also exhibits azoreductase activity. Catalyzes the reductive cleavage of the azo bond in aromatic azo compounds to the corresponding amines. The protein is FMN-dependent NADH:quinone oxidoreductase of Shewanella amazonensis (strain ATCC BAA-1098 / SB2B).